Reading from the N-terminus, the 229-residue chain is Urease accessory protein UreF (229 aa).

The protein belongs to the UreF family. As to quaternary structure, ureD, UreF and UreG form a complex that acts as a GTP-hydrolysis-dependent molecular chaperone, activating the urease apoprotein by helping to assemble the nickel containing metallocenter of UreC. The UreE protein probably delivers the nickel.

The protein resides in the cytoplasm. Required for maturation of urease via the functional incorporation of the urease nickel metallocenter. This is Urease accessory protein UreF from Staphylococcus saprophyticus subsp. saprophyticus (strain ATCC 15305 / DSM 20229 / NCIMB 8711 / NCTC 7292 / S-41).